The primary structure comprises 660 residues: FAST kinase domain-containing protein 3, mitochondrial (660 aa).

Residues 1-57 (MALVTLRRNLYHLSDFRIHGALAALKTQQVNHVHKTVKEHLCPWFWSQHPGPIRVRF) constitute a mitochondrion transit peptide. The region spanning 591 to 649 (VALCIDGPKRFCLNSKHLLGKEATKQRHLRLLGYQVVQIPYYEIEMLKSRLELVDYLQG) is the RAP domain.

Belongs to the FAST kinase family.

The protein localises to the mitochondrion. In terms of biological role, required for normal mitochondrial respiration. Increases steady-state levels and half-lives of a subset of mature mitochondrial mRNAs MT-ND2, MT-ND3, MT-CYTB, MT-CO2, and MT-ATP8/6. Promotes MT-CO1 mRNA translation and increases mitochondrial complex IV assembly and activity. This Bos taurus (Bovine) protein is FAST kinase domain-containing protein 3, mitochondrial (FASTKD3).